Here is a 95-residue protein sequence, read N- to C-terminus: Defensin-like protein 247 (95 aa).

An N-terminal signal peptide occupies residues 1–24; sequence MKFAAIFLVTCVFFSLFSSNLSQG. 4 disulfides stabilise this stretch: Cys-37/Cys-94, Cys-48/Cys-77, Cys-56/Cys-87, and Cys-75/Cys-89.

It belongs to the DEFL family.

The protein resides in the secreted. The sequence is that of Defensin-like protein 247 (SCRL6) from Arabidopsis thaliana (Mouse-ear cress).